The sequence spans 942 residues: DDB1- and CUL4-associated factor 5 (942 aa).

WD repeat units follow at residues 51 to 91 (GHFG…HSRV), 99 to 139 (EHHS…LDVF), 140 to 180 (AHED…HGEP), 185 to 225 (NYPS…SSLL), 277 to 317 (FNSC…EAGG), and 331 to 370 (GHRS…GCTG). Disordered regions lie at residues 449–478 (GVSE…ESAD) and 490–509 (TTNT…AASR). The segment covering 454 to 465 (SGYTDSESSASL) has biased composition (polar residues). Residue threonine 500 is modified to Phosphothreonine. Residues serine 531, serine 533, serine 626, serine 628, serine 645, serine 648, and serine 651 each carry the phosphoserine modification. 3 disordered regions span residues 544–655 (TDLF…DIES), 676–824 (NNKD…EERS), and 889–942 (ACET…KLKT). Over residues 625 to 641 (LSSSPTSSPERSTSTLE) the composition is skewed to low complexity. Composition is skewed to basic and acidic residues over residues 690-701 (DEGRAGTSHKDN) and 728-738 (CSKDTFKEETP). A compositionally biased stretch (polar residues) spans 760–770 (GTSQDTGNSGS). The residue at position 794 (serine 794) is a Phosphoserine. The segment covering 801 to 815 (SGSTLNSGSGNCPRT) has biased composition (polar residues).

As to quaternary structure, interacts with DDB1, CUL4A or CUL4B. Interacts with L3MBTL3. Interacts with DNMT1. Interacts with E2F1. Interacts with SOX2. Ubiquitous.

It participates in protein modification; protein ubiquitination. Is a substrate receptor for the CUL4-DDB1 E3 ubiquitin-protein ligase complex (CRL4). The complex CRL4-DCAF5 is involved in the ubiquitination of a set of methylated non-histone proteins, including SOX2, DNMT1 and E2F1. In Homo sapiens (Human), this protein is DDB1- and CUL4-associated factor 5 (DCAF5).